Reading from the N-terminus, the 481-residue chain is GTPase Der (481 aa).

EngA-type G domains are found at residues 3–166 (PVVA…ESDF) and 194–367 (IKLA…MSAT). Residues 9 to 16 (GRPNVGKS), 56 to 60 (DTGGI), 118 to 121 (NKVD), 200 to 207 (GKPNVGKS), 247 to 251 (DTAGV), and 312 to 315 (NKWD) each bind GTP. One can recognise a KH-like domain in the interval 368–452 (KRINTALLTQ…PIKIEFREGN (85 aa)).

The protein belongs to the TRAFAC class TrmE-Era-EngA-EngB-Septin-like GTPase superfamily. EngA (Der) GTPase family. As to quaternary structure, associates with the 50S ribosomal subunit.

GTPase that plays an essential role in the late steps of ribosome biogenesis. The protein is GTPase Der of Alteromonas mediterranea (strain DSM 17117 / CIP 110805 / LMG 28347 / Deep ecotype).